The chain runs to 307 residues: Methionyl-tRNA formyltransferase (307 aa).

Position 109 to 112 (Ser109 to Pro112) interacts with (6S)-5,6,7,8-tetrahydrofolate.

This sequence belongs to the Fmt family.

It catalyses the reaction L-methionyl-tRNA(fMet) + (6R)-10-formyltetrahydrofolate = N-formyl-L-methionyl-tRNA(fMet) + (6S)-5,6,7,8-tetrahydrofolate + H(+). In terms of biological role, attaches a formyl group to the free amino group of methionyl-tRNA(fMet). The formyl group appears to play a dual role in the initiator identity of N-formylmethionyl-tRNA by promoting its recognition by IF2 and preventing the misappropriation of this tRNA by the elongation apparatus. This chain is Methionyl-tRNA formyltransferase, found in Dechloromonas aromatica (strain RCB).